The sequence spans 330 residues: Polyprenal reductase (330 aa).

Residues 1-19 (MASWVGTELSALNPLRTLW) are Cytoplasmic-facing. A helical membrane pass occupies residues 20-40 (LALAAAFLLALLLQLAPAGLL). The Lumenal segment spans residues 41 to 74 (PNCALFQDLIRYGKTKLSGPRRPAVCRAFDVPKR). The helical transmembrane segment at 75–95 (YFSHFYVVSVLWNGFLLWFLS) threads the bilayer. Topologically, residues 96–132 (RSLFLGAPFPNWLRALLRTLGSTQFRALEMESKASQM) are cytoplasmic. A helical membrane pass occupies residues 133-153 (LVGELALSAFLVLVFLWVHSV). Residues 154-168 (RRLFECFYISVFSNA) lie on the Lumenal side of the membrane. The chain crosses the membrane as a helical span at residues 169–189 (VMHVVQYCFGLVYYVLVGLTV). The Cytoplasmic segment spans residues 190-206 (LSQVPMDDKNVYMLGKN). A helical membrane pass occupies residues 207–227 (LLLPARWFHVLGMMMFLWSSA). Residues 228–277 (HQYECHVILSNLRRNKKGAIVHCQHRIPFGDWFEYVSSANYLAELMIYIS) lie on the Lumenal side of the membrane. Residues 278–298 (MAVTFGFHNFTWWLVVAYVFF) traverse the membrane as a helical segment. Over 299–330 (CQALSAFFNHKFYKSTFVSYPKHRKAFLPFLF) the chain is Cytoplasmic.

It belongs to the steroid 5-alpha reductase family. Polyprenal reductase subfamily.

It localises to the endoplasmic reticulum membrane. It catalyses the reaction a di-trans,poly-cis-dolichal + NADP(+) = a di-trans,poly-cis-polyprenal + NADPH + H(+). It carries out the reaction a 3-oxo-5alpha-steroid + NADP(+) = a 3-oxo-Delta(4)-steroid + NADPH + H(+). The enzyme catalyses androst-4-ene-3,17-dione + NADPH + H(+) = 5alpha-androstan-3,17-dione + NADP(+). The catalysed reaction is 17beta-hydroxy-5alpha-androstan-3-one + NADP(+) = testosterone + NADPH + H(+). It functions in the pathway protein modification; protein glycosylation. Functionally, plays a key role in early steps of protein N-linked glycosylation by being involved in the conversion of polyprenol into dolichol. Acts as a polyprenal reductase that mediates the reduction of polyprenal into dolichal in a NADP-dependent mechanism. Dolichols are required for the synthesis of dolichol-linked monosaccharides and the oligosaccharide precursor used for N-glycosylation. Also able to convert testosterone (T) into 5-alpha-dihydrotestosterone (DHT). The polypeptide is Polyprenal reductase (Mesocricetus auratus (Golden hamster)).